Reading from the N-terminus, the 148-residue chain is Large ribosomal subunit protein bL9 (148 aa).

The protein belongs to the bacterial ribosomal protein bL9 family.

Its function is as follows. Binds to the 23S rRNA. This Acetivibrio thermocellus (strain ATCC 27405 / DSM 1237 / JCM 9322 / NBRC 103400 / NCIMB 10682 / NRRL B-4536 / VPI 7372) (Clostridium thermocellum) protein is Large ribosomal subunit protein bL9.